An 804-amino-acid chain; its full sequence is Lon protease 2 (804 aa).

Positions methionine 6–leucine 199 constitute a Lon N-terminal domain. Glycine 362 to threonine 369 contacts ATP. The Lon proteolytic domain occupies glutamate 598–glycine 779. Active-site residues include serine 685 and lysine 728.

It belongs to the peptidase S16 family. In terms of assembly, homohexamer. Organized in a ring with a central cavity.

Its subcellular location is the cytoplasm. The catalysed reaction is Hydrolysis of proteins in presence of ATP.. Its function is as follows. ATP-dependent serine protease that mediates the selective degradation of mutant and abnormal proteins as well as certain short-lived regulatory proteins. Required for cellular homeostasis and for survival from DNA damage and developmental changes induced by stress. Degrades polypeptides processively to yield small peptide fragments that are 5 to 10 amino acids long. Binds to DNA in a double-stranded, site-specific manner. This chain is Lon protease 2, found in Thermus thermophilus (strain ATCC BAA-163 / DSM 7039 / HB27).